The primary structure comprises 229 residues: Cytidylate kinase (229 aa).

Gly-12 to Ser-20 lines the ATP pocket.

It belongs to the cytidylate kinase family. Type 1 subfamily.

It localises to the cytoplasm. The enzyme catalyses CMP + ATP = CDP + ADP. It carries out the reaction dCMP + ATP = dCDP + ADP. The protein is Cytidylate kinase of Rhodococcus jostii (strain RHA1).